Consider the following 167-residue polypeptide: MAKMLRVGKITNTHGIKGDLKVLPLTDYFERFEELEWVYIEGFKDKFYIENIKYKPTLVILSFEGYGDINLVEKFKDRYLLIDESQRRILPEDTYYIADIIGLDVFTVKDEYIGKVVDIIQTGSSEVYVIRMNNLKEIMIPSVKEFMPEISLEKKRITIDPIEGMIE.

The region spanning 92–165 is the PRC barrel domain; sequence EDTYYIADII…RITIDPIEGM (74 aa).

Belongs to the RimM family. Binds ribosomal protein uS19.

It is found in the cytoplasm. An accessory protein needed during the final step in the assembly of 30S ribosomal subunit, possibly for assembly of the head region. Essential for efficient processing of 16S rRNA. May be needed both before and after RbfA during the maturation of 16S rRNA. It has affinity for free ribosomal 30S subunits but not for 70S ribosomes. The sequence is that of Ribosome maturation factor RimM from Alkaliphilus oremlandii (strain OhILAs) (Clostridium oremlandii (strain OhILAs)).